Reading from the N-terminus, the 645-residue chain is Chaperone protein DnaK (645 aa).

Thr200 carries the phosphothreonine; by autocatalysis modification. The disordered stretch occupies residues Ala603 to Lys645. Over residues Asp609–Gly623 the composition is skewed to low complexity. Basic and acidic residues predominate over residues Pro625–Lys645.

Belongs to the heat shock protein 70 family.

In terms of biological role, acts as a chaperone. This chain is Chaperone protein DnaK, found in Anaplasma marginale (strain St. Maries).